Reading from the N-terminus, the 208-residue chain is Adenylyl-sulfate kinase (208 aa).

31–38 provides a ligand contact to ATP; sequence GLSGSGKS. Residue S105 is the Phosphoserine intermediate of the active site.

It belongs to the APS kinase family.

The catalysed reaction is adenosine 5'-phosphosulfate + ATP = 3'-phosphoadenylyl sulfate + ADP + H(+). It functions in the pathway sulfur metabolism; hydrogen sulfide biosynthesis; sulfite from sulfate: step 2/3. Functionally, catalyzes the synthesis of activated sulfate. This Pseudomonas entomophila (strain L48) protein is Adenylyl-sulfate kinase.